The sequence spans 103 residues: Large ribosomal subunit protein bL21 (103 aa).

The protein belongs to the bacterial ribosomal protein bL21 family. In terms of assembly, part of the 50S ribosomal subunit. Contacts protein L20.

In terms of biological role, this protein binds to 23S rRNA in the presence of protein L20. The protein is Large ribosomal subunit protein bL21 of Ralstonia nicotianae (strain ATCC BAA-1114 / GMI1000) (Ralstonia solanacearum).